A 506-amino-acid polypeptide reads, in one-letter code: MTTQIPNQDSEILLTMTNVCKSFPGVKALDNANLTVRSHSVHALMGENGAGKSTLLKCLFGIYSKDEGDILFLGKPVNFKTSKEALENGISMVHQELNLVKQCTVMDNLWLGRYPLKAGFVDHGKMYRDTKAIFEELDIDIDPKEKVAKLSVSQMQMIEIAKAFSYNAKIVIMDEPTSSLSEKEVEHLFKIIAKLKQRGCGIIYISHKMDEIFKICDEITILRDGKWINTVAVKGTTMDQIVSMMVGRELTQRFPPKTNTPKETILTVENLTALNQPSIQDVSFELRKGEVLGIAGLVGAKRTDIVETIFGVRERKSGVIKLHDKEMKNRNAFEAINNGFALVTEERRSTGIYANLSIEFNSLISNMKSYISKLGLLSNTKMKSDTQWVIDSMNVKTPSHKTNIGSLSGGNQQKVVIGRWLLTQPEILMLDEPTRGIDIGAKYEIYQLIMELAKKDKGIIMISSEMPELLGVTDRILVMSNGKVAGIVNTAETSQEEILQLAAKYL.

2 consecutive ABC transporter domains span residues 14–249 (LTMT…VGRE) and 260–506 (TPKE…AKYL). 46–53 (GENGAGKS) is an ATP binding site.

It belongs to the ABC transporter superfamily. Galactose/methyl galactoside importer (TC 3.A.1.2.3) family. In terms of assembly, the complex is composed of one ATP-binding protein (MglA), two transmembrane proteins (MglC) and a solute-binding protein (MglB).

The protein localises to the cell inner membrane. It catalyses the reaction D-galactose(out) + ATP + H2O = D-galactose(in) + ADP + phosphate + H(+). It carries out the reaction methyl beta-D-galactoside(out) + ATP + H2O = methyl beta-D-galactoside(in) + ADP + phosphate + H(+). Its function is as follows. Part of the ABC transporter complex MglABC involved in galactose/methyl galactoside import. Responsible for energy coupling to the transport system. This Pasteurella multocida (strain Pm70) protein is Galactose/methyl galactoside import ATP-binding protein MglA.